The chain runs to 99 residues: Large ribosomal subunit protein bL21 (99 aa).

This sequence belongs to the bacterial ribosomal protein bL21 family. Part of the 50S ribosomal subunit. Contacts protein L20.

This protein binds to 23S rRNA in the presence of protein L20. The protein is Large ribosomal subunit protein bL21 of Deinococcus geothermalis (strain DSM 11300 / CIP 105573 / AG-3a).